A 415-amino-acid polypeptide reads, in one-letter code: Tyrosine-protein phosphatase non-receptor type 2 (415 aa).

In terms of domain architecture, Tyrosine-protein phosphatase spans 5 to 275 (IEREFEELDT…RFSYMAIIEG (271 aa)). The residue at position 22 (tyrosine 22) is a Phosphotyrosine. Residue serine 52 is modified to Phosphoserine. At tyrosine 68 the chain carries Phosphotyrosine. Substrate contacts are provided by residues aspartate 182, 216 to 222 (CSAGIGR), and glutamine 260. The active-site Phosphocysteine intermediate is the cysteine 216. Cysteine 216 bears the S-nitrosocysteine mark. Phosphoserine is present on residues serine 293, serine 298, and serine 304. An endoplasmic reticulum location region spans residues 346–415 (ESALRKRIRE…WTLFFQQNAL (70 aa)). The tract at residues 376-415 (ERKRKRWLYWQPILTKMGFMSVILVGAFVGWTLFFQQNAL) is mediates interaction with STX17.

The protein belongs to the protein-tyrosine phosphatase family. Non-receptor class 1 subfamily. In terms of assembly, interacts with RMDN3. Isoform 1 interacts with TMED9. Isoform 1 interacts with STX17; dephosphorylates STX17. Interacts with ITGA1 (via cytoplasmic domain); activates the phosphatase activity towards EGFR. Interacts with TRAF2; probably involved in tumor necrosis factor-mediated signaling. Interacts with MET. Interacts with FAM220A and STAT3; interaction with FAM220A promotes interaction of PTPN2 with transcriptional activator STAT3, leading to dephosphorylation of STAT3 by PTPN2 and negative regulation of STAT3 transcriptional activator activity. Post-translationally, specifically phosphorylated in a cell cycle-dependent manner by cyclin-dependent kinases CDK1 and CDK2. Probably activated through phosphorylation by PKR. As to expression, ubiquitously expressed. Isoform 2 is probably the major isoform. Isoform 1 is expressed in T-cells and in placenta.

The protein localises to the endoplasmic reticulum. Its subcellular location is the endoplasmic reticulum-Golgi intermediate compartment. It is found in the nucleus. The protein resides in the cytoplasm. It localises to the cell membrane. The catalysed reaction is O-phospho-L-tyrosyl-[protein] + H2O = L-tyrosyl-[protein] + phosphate. Functionally, non-receptor type tyrosine-specific phosphatase that dephosphorylates receptor protein tyrosine kinases including INSR, EGFR, CSF1R, PDGFR. Also dephosphorylates non-receptor protein tyrosine kinases like JAK1, JAK2, JAK3, Src family kinases, STAT1, STAT3 and STAT6 either in the nucleus or the cytoplasm. Negatively regulates numerous signaling pathways and biological processes like hematopoiesis, inflammatory response, cell proliferation and differentiation, and glucose homeostasis. Plays a multifaceted and important role in the development of the immune system. Functions in T-cell receptor signaling through dephosphorylation of FYN and LCK to control T-cells differentiation and activation. Dephosphorylates CSF1R, negatively regulating its downstream signaling and macrophage differentiation. Negatively regulates cytokine (IL2/interleukin-2 and interferon)-mediated signaling through dephosphorylation of the cytoplasmic kinases JAK1, JAK3 and their substrate STAT1, that propagate signaling downstream of the cytokine receptors. Also regulates the IL6/interleukin-6 and IL4/interleukin-4 cytokine signaling through dephosphorylation of STAT3 and STAT6 respectively. In addition to the immune system, it is involved in anchorage-dependent, negative regulation of EGF-stimulated cell growth. Activated by the integrin ITGA1/ITGB1, it dephosphorylates EGFR and negatively regulates EGF signaling. Dephosphorylates PDGFRB and negatively regulates platelet-derived growth factor receptor-beta signaling pathway and therefore cell proliferation. Negatively regulates tumor necrosis factor-mediated signaling downstream via MAPK through SRC dephosphorylation. May also regulate the hepatocyte growth factor receptor signaling pathway through dephosphorylation of the hepatocyte growth factor receptor MET. Also plays an important role in glucose homeostasis. For instance, negatively regulates the insulin receptor signaling pathway through the dephosphorylation of INSR and control gluconeogenesis and liver glucose production through negative regulation of the IL6 signaling pathways. May also bind DNA. This is Tyrosine-protein phosphatase non-receptor type 2 (PTPN2) from Homo sapiens (Human).